The following is a 150-amino-acid chain: uncharacterized protein (150 aa).

The N-terminal stretch at 1–22 (MVIALKRFSFLASIATLTVLNA) is a signal peptide. Cys-23 carries N-palmitoyl cysteine lipidation. Cys-23 carries S-diacylglycerol cysteine lipidation.

This sequence belongs to the MG067/MG068/MG395 family.

It localises to the cell membrane. This is an uncharacterized protein from Mycoplasma pneumoniae (strain ATCC 29342 / M129 / Subtype 1) (Mycoplasmoides pneumoniae).